The chain runs to 236 residues: Alpha-acetolactate decarboxylase (236 aa).

Belongs to the alpha-acetolactate decarboxylase family.

It carries out the reaction (2S)-2-acetolactate + H(+) = (R)-acetoin + CO2. Its pathway is polyol metabolism; (R,R)-butane-2,3-diol biosynthesis; (R,R)-butane-2,3-diol from pyruvate: step 2/3. Functionally, converts acetolactate into acetoin. The chain is Alpha-acetolactate decarboxylase (aldB) from Lactococcus lactis subsp. cremoris (strain MG1363).